A 627-amino-acid chain; its full sequence is (R)-linalool synthase 1, chloroplastic (627 aa).

The N-terminal 21 residues, 1 to 21 (MAFVSIAPLASRCCVHKSFVS), are a transit peptide targeting the chloroplast. Mg(2+)-binding residues include Asp378, Asp382, and Glu530. Residues 378–382 (DDIYD) carry the DDXXD motif motif.

This sequence belongs to the terpene synthase family. Tpsd subfamily. Mg(2+) is required as a cofactor. The cofactor is Mn(2+).

The protein localises to the plastid. Its subcellular location is the chloroplast. It carries out the reaction (2E)-geranyl diphosphate + H2O = (R)-linalool + diphosphate. It participates in terpene metabolism; oleoresin biosynthesis. Terpene synthase (TPS) involved in the biosynthesis of monoterpene natural products included in conifer oleoresin secretions and volatile emissions; these compounds contribute to biotic and abiotic stress defense against herbivores and pathogens. Catalyzes the conversion of (2E)-geranyl diphosphate (GPP) to (R)-linalool. The sequence is that of (R)-linalool synthase 1, chloroplastic from Picea sitchensis (Sitka spruce).